A 1479-amino-acid chain; its full sequence is Rhoptry neck protein 2 (1479 aa).

Residues 1–24 form the signal peptide; it reads MTKRAGLPLGRAFLVLILLSAADS. Topologically, residues 25-1277 are cytoplasmic; sequence LFFSSFPRSA…EQRRKSRKQA (1253 aa). Disordered regions lie at residues 49–68 and 291–316; these read PDSDATPGLRPQPSPRTFRP and VYATPPAPRPVPVQSNQTEKERSPTS. The chain crosses the membrane as a helical span at residues 1278 to 1298; that stretch reads IIGVLTLGMMGLYALLNVADI. Residues 1297-1333 are interaction with AMA1; the sequence is DIVQHMEDIGGAPPVSCVTNEILGVTCAPQAIAKATT. Over 1299-1479 the chain is Extracellular; the sequence is VQHMEDIGGA…FPMSAPLIKA (181 aa). A disulfide bridge links cysteine 1313 with cysteine 1323. A disordered region spans residues 1419–1445; the sequence is TYRKTEQETKQPPRPRNLHNPSSWGDT.

This sequence belongs to the apicomplexan parasites RON2 family. In terms of assembly, component of the moving junction (MJ) complex, composed of AMA1, a transmembrane protein on the parasite surface, and a complex of the rhoptry neck proteins RON2, RON4, RON5 and RON8 localized to the cytoplasmic face of the host plasma membrane. Interacts (via C-terminus) with AMA1 (via ectodomain); RON2 serves as the receptor for AMA1 on the host plasma membrane. AMA1 and the RON proteins are initially in distinct compartments within the parasite, namely the micronemes and the rhoptries, and interaction happens only upon initiation of invasion when the micronemes and rhoptries discharge.

The protein resides in the secreted. It localises to the cytoplasm. The protein localises to the host cell membrane. Functionally, essential rhoptry neck protein that plays an important role in host cell invasion. Upon host invasion by tachyzoites, the protein is injected into the host cell where it functions as a receptor for apical membrane antigen 1 (AMA1) on the parasite. Part of the moving junction (MJ) complex, a ringlike structure formed between the plasma membranes of the apical tip of the parasite and the target host cell. During invasion, the MJ migrates from the anterior to the posterior of the parasite, leading to internalization of the parasite into a parasitophorous vacuole (PV). The polypeptide is Rhoptry neck protein 2 (RON2) (Toxoplasma gondii (strain ATCC 50611 / Me49)).